A 165-amino-acid chain; its full sequence is Crossover junction endodeoxyribonuclease RuvC (165 aa).

Active-site residues include Asp-7, Glu-68, and His-142. Residues Asp-7, Glu-68, and His-142 each contribute to the Mg(2+) site.

Belongs to the RuvC family. In terms of assembly, homodimer which binds Holliday junction (HJ) DNA. The HJ becomes 2-fold symmetrical on binding to RuvC with unstacked arms; it has a different conformation from HJ DNA in complex with RuvA. In the full resolvosome a probable DNA-RuvA(4)-RuvB(12)-RuvC(2) complex forms which resolves the HJ. Requires Mg(2+) as cofactor.

The protein resides in the cytoplasm. It catalyses the reaction Endonucleolytic cleavage at a junction such as a reciprocal single-stranded crossover between two homologous DNA duplexes (Holliday junction).. In terms of biological role, the RuvA-RuvB-RuvC complex processes Holliday junction (HJ) DNA during genetic recombination and DNA repair. Endonuclease that resolves HJ intermediates. Cleaves cruciform DNA by making single-stranded nicks across the HJ at symmetrical positions within the homologous arms, yielding a 5'-phosphate and a 3'-hydroxyl group; requires a central core of homology in the junction. The consensus cleavage sequence is 5'-(A/T)TT(C/G)-3'. Cleavage occurs on the 3'-side of the TT dinucleotide at the point of strand exchange. HJ branch migration catalyzed by RuvA-RuvB allows RuvC to scan DNA until it finds its consensus sequence, where it cleaves and resolves the cruciform DNA. The protein is Crossover junction endodeoxyribonuclease RuvC of Anaplasma marginale (strain St. Maries).